Here is a 199-residue protein sequence, read N- to C-terminus: Glycerol-3-phosphate acyltransferase (199 aa).

5 consecutive transmembrane segments (helical) span residues 4–24, 56–76, 80–100, 115–135, and 154–176; these read FALF…AILI, LAVL…GYYL, QFEL…PIFF, IAPI…FVFL, and YVWW…LIYR.

It belongs to the PlsY family. As to quaternary structure, probably interacts with PlsX.

It is found in the cell inner membrane. The catalysed reaction is an acyl phosphate + sn-glycerol 3-phosphate = a 1-acyl-sn-glycero-3-phosphate + phosphate. It participates in lipid metabolism; phospholipid metabolism. Its function is as follows. Catalyzes the transfer of an acyl group from acyl-phosphate (acyl-PO(4)) to glycerol-3-phosphate (G3P) to form lysophosphatidic acid (LPA). This enzyme utilizes acyl-phosphate as fatty acyl donor, but not acyl-CoA or acyl-ACP. In Haemophilus influenzae (strain PittEE), this protein is Glycerol-3-phosphate acyltransferase.